Reading from the N-terminus, the 416-residue chain is Serine hydroxymethyltransferase (416 aa).

Residues L117 and 121–123 each bind (6S)-5,6,7,8-tetrahydrofolate; that span reads GHL. Residue K226 is modified to N6-(pyridoxal phosphate)lysine.

Belongs to the SHMT family. In terms of assembly, homodimer. It depends on pyridoxal 5'-phosphate as a cofactor.

The protein resides in the cytoplasm. The catalysed reaction is (6R)-5,10-methylene-5,6,7,8-tetrahydrofolate + glycine + H2O = (6S)-5,6,7,8-tetrahydrofolate + L-serine. It participates in one-carbon metabolism; tetrahydrofolate interconversion. It functions in the pathway amino-acid biosynthesis; glycine biosynthesis; glycine from L-serine: step 1/1. In terms of biological role, catalyzes the reversible interconversion of serine and glycine with tetrahydrofolate (THF) serving as the one-carbon carrier. This reaction serves as the major source of one-carbon groups required for the biosynthesis of purines, thymidylate, methionine, and other important biomolecules. Also exhibits THF-independent aldolase activity toward beta-hydroxyamino acids, producing glycine and aldehydes, via a retro-aldol mechanism. In Leptospira biflexa serovar Patoc (strain Patoc 1 / Ames), this protein is Serine hydroxymethyltransferase.